A 95-amino-acid polypeptide reads, in one-letter code: Co-chaperonin GroES (95 aa).

It belongs to the GroES chaperonin family. Heptamer of 7 subunits arranged in a ring. Interacts with the chaperonin GroEL.

It is found in the cytoplasm. Together with the chaperonin GroEL, plays an essential role in assisting protein folding. The GroEL-GroES system forms a nano-cage that allows encapsulation of the non-native substrate proteins and provides a physical environment optimized to promote and accelerate protein folding. GroES binds to the apical surface of the GroEL ring, thereby capping the opening of the GroEL channel. The polypeptide is Co-chaperonin GroES (Jannaschia sp. (strain CCS1)).